The sequence spans 248 residues: Triosephosphate isomerase (248 aa).

Residue 9–11 participates in substrate binding; the sequence is NWK. His-94 functions as the Electrophile in the catalytic mechanism. The Proton acceptor role is filled by Glu-166. Residues Gly-172, Ser-211, and 232–233 each bind substrate; that span reads GG.

The protein belongs to the triosephosphate isomerase family. In terms of assembly, homodimer.

It is found in the cytoplasm. It carries out the reaction D-glyceraldehyde 3-phosphate = dihydroxyacetone phosphate. It functions in the pathway carbohydrate biosynthesis; gluconeogenesis. It participates in carbohydrate degradation; glycolysis; D-glyceraldehyde 3-phosphate from glycerone phosphate: step 1/1. Involved in the gluconeogenesis. Catalyzes stereospecifically the conversion of dihydroxyacetone phosphate (DHAP) to D-glyceraldehyde-3-phosphate (G3P). This is Triosephosphate isomerase from Ruthia magnifica subsp. Calyptogena magnifica.